We begin with the raw amino-acid sequence, 1755 residues long: Transposon Ty1-ER2 Gag-Pol polyprotein (1755 aa).

Polar residues-rich tracts occupy residues methionine 1–proline 10, threonine 48–serine 60, and glutamine 127–phenylalanine 152. Disordered stretches follow at residues methionine 1–glutamine 93, proline 126–proline 173, and glycine 352–threonine 421. Positions threonine 153–threonine 165 are enriched in low complexity. The interval asparagine 299–histidine 401 is RNA-binding. Residues asparagine 402–serine 418 are compositionally biased toward low complexity. The active-site For protease activity; shared with dimeric partner is the aspartate 461. Residues asparagine 583 to cysteine 640 are integrase-type zinc finger-like. Positions asparagine 660 to proline 835 constitute an Integrase catalytic domain. Mg(2+) contacts are provided by aspartate 671 and aspartate 736. The tract at residues alanine 958–asparagine 1170 is disordered. Positions serine 960–threonine 969 are enriched in low complexity. A compositionally biased stretch (polar residues) spans serine 1005–threonine 1015. The segment covering glutamate 1038 to serine 1053 has biased composition (basic and acidic residues). 2 stretches are compositionally biased toward polar residues: residues tyrosine 1054–glutamate 1082 and serine 1095–leucine 1106. Residues lysine 1178 to arginine 1212 carry the Bipartite nuclear localization signal motif. Residues asparagine 1338 to glutamine 1476 form the Reverse transcriptase Ty1/copia-type domain. 6 residues coordinate Mg(2+): aspartate 1346, aspartate 1427, aspartate 1428, aspartate 1610, glutamate 1652, and aspartate 1685. The 143-residue stretch at aspartate 1610–lysine 1752 folds into the RNase H Ty1/copia-type domain.

As to quaternary structure, the capsid protein forms a homotrimer, from which the VLPs are assembled. The protease is a homodimer, whose active site consists of two apposed aspartic acid residues. In terms of processing, initially, virus-like particles (VLPs) are composed of the structural unprocessed proteins Gag and Gag-Pol, and also contain the host initiator methionine tRNA (tRNA(i)-Met) which serves as a primer for minus-strand DNA synthesis, and a dimer of genomic Ty RNA. Processing of the polyproteins occurs within the particle and proceeds by an ordered pathway, called maturation. First, the protease (PR) is released by autocatalytic cleavage of the Gag-Pol polyprotein yielding capsid protein p45 and a Pol-p154 precursor protein. This cleavage is a prerequisite for subsequent processing of Pol-p154 at the remaining sites to release the mature structural and catalytic proteins. Maturation takes place prior to the RT reaction and is required to produce transposition-competent VLPs.

It is found in the cytoplasm. Its subcellular location is the nucleus. The catalysed reaction is DNA(n) + a 2'-deoxyribonucleoside 5'-triphosphate = DNA(n+1) + diphosphate. The enzyme catalyses Endonucleolytic cleavage to 5'-phosphomonoester.. Its function is as follows. Capsid protein (CA) is the structural component of the virus-like particle (VLP), forming the shell that encapsulates the retrotransposons dimeric RNA genome. The particles are assembled from trimer-clustered units and there are holes in the capsid shells that allow for the diffusion of macromolecules. CA also has nucleocapsid-like chaperone activity, promoting primer tRNA(i)-Met annealing to the multipartite primer-binding site (PBS), dimerization of Ty1 RNA and initiation of reverse transcription. The aspartyl protease (PR) mediates the proteolytic cleavages of the Gag and Gag-Pol polyproteins after assembly of the VLP. In terms of biological role, reverse transcriptase/ribonuclease H (RT) is a multifunctional enzyme that catalyzes the conversion of the retro-elements RNA genome into dsDNA within the VLP. The enzyme displays a DNA polymerase activity that can copy either DNA or RNA templates, and a ribonuclease H (RNase H) activity that cleaves the RNA strand of RNA-DNA heteroduplexes during plus-strand synthesis and hydrolyzes RNA primers. The conversion leads to a linear dsDNA copy of the retrotransposon that includes long terminal repeats (LTRs) at both ends. Functionally, integrase (IN) targets the VLP to the nucleus, where a subparticle preintegration complex (PIC) containing at least integrase and the newly synthesized dsDNA copy of the retrotransposon must transit the nuclear membrane. Once in the nucleus, integrase performs the integration of the dsDNA into the host genome. The polypeptide is Transposon Ty1-ER2 Gag-Pol polyprotein (TY1B-ER2) (Saccharomyces cerevisiae (strain ATCC 204508 / S288c) (Baker's yeast)).